We begin with the raw amino-acid sequence, 553 residues long: MGIASILSNKNITINVDHVIDSDEAMLLAIGYRQELRREFSLWSIFAVSFSVLGLLPSIAACFDYQQLVVGMSPLPWLIAMIFITSVAYSMAEIASAFPCSAGTPYAVSQLAPKKYASFLTWFTCWTNWSCQITAAPSVSYSCACMMLALHSFTDPSFVASNAQIFGLTTGIQVLCAFMACFPTKWVARFSSAGTTCNIVFLVVVFIMILGGNKRDQIKEGISKFNSNSTAWGLDNQAEWPTGLSFLISFMGVIWAMSGYDSPFHLAEKCSNAAVAAPRAIVLTSTVGGLIGFMFMIAIAYTLVDLNQISADPESLGQPFVTYLTQIMDKNLVIGATALTIISSFFMAQNCLLASSRVTYAYARDGLFPLSGIWKKVSPKTQTPINAVIMNFIVEELLLLLIFGGDVSIGSIFSIGALAGFISFTMPTLLKITYARKTFQPGPWNLGKWSEPIGWVSVAFVGLMVPILCFPTVKGADLTPTEMNWTCLVYFGLILLTTIWFVVYARRWYVGPRTNISEEDIVYGEKTEDEGDEIPDVIDGQKVSISSTEKRYQ.

Transmembrane regions (helical) follow at residues 43 to 63 (WSIF…AACF), 68 to 88 (LVVG…TSVA), 133 to 153 (ITAA…LHSF), 163 to 183 (AQIF…ACFP), 190 to 210 (FSSA…IMIL), 240 to 260 (WPTG…MSGY), 280 to 300 (AIVL…IAIA), 333 to 353 (VIGA…NCLL), 397 to 417 (LLLL…SIGA), 453 to 473 (IGWV…FPTV), and 485 to 505 (WTCL…VVYA).

Belongs to the amino acid-polyamine-organocation (APC) superfamily.

It localises to the membrane. The protein is Putative polyamine transporter (GPT1) of Candida albicans (Yeast).